Consider the following 379-residue polypeptide: NADH-quinone oxidoreductase subunit D 2 (379 aa).

Belongs to the complex I 49 kDa subunit family. In terms of assembly, NDH-1 is composed of 14 different subunits. Subunits NuoB, C, D, E, F, and G constitute the peripheral sector of the complex.

It is found in the cell inner membrane. The catalysed reaction is a quinone + NADH + 5 H(+)(in) = a quinol + NAD(+) + 4 H(+)(out). Functionally, NDH-1 shuttles electrons from NADH, via FMN and iron-sulfur (Fe-S) centers, to quinones in the respiratory chain. The immediate electron acceptor for the enzyme in this species is believed to be ubiquinone. Couples the redox reaction to proton translocation (for every two electrons transferred, four hydrogen ions are translocated across the cytoplasmic membrane), and thus conserves the redox energy in a proton gradient. The protein is NADH-quinone oxidoreductase subunit D 2 of Anaeromyxobacter dehalogenans (strain 2CP-C).